Consider the following 391-residue polypeptide: ATP phosphoribosyltransferase regulatory subunit (391 aa).

The protein belongs to the class-II aminoacyl-tRNA synthetase family. HisZ subfamily. As to quaternary structure, heteromultimer composed of HisG and HisZ subunits.

Its subcellular location is the cytoplasm. It functions in the pathway amino-acid biosynthesis; L-histidine biosynthesis; L-histidine from 5-phospho-alpha-D-ribose 1-diphosphate: step 1/9. Required for the first step of histidine biosynthesis. May allow the feedback regulation of ATP phosphoribosyltransferase activity by histidine. In Clostridium kluyveri (strain ATCC 8527 / DSM 555 / NBRC 12016 / NCIMB 10680 / K1), this protein is ATP phosphoribosyltransferase regulatory subunit.